Here is a 338-residue protein sequence, read N- to C-terminus: 1-aminocyclopropane-1-carboxylate deaminase (338 aa).

At Lys-51 the chain carries N6-(pyridoxal phosphate)lysine. Ser-78 serves as the catalytic Nucleophile.

It belongs to the ACC deaminase/D-cysteine desulfhydrase family. In terms of assembly, homotrimer. Pyridoxal 5'-phosphate is required as a cofactor.

It carries out the reaction 1-aminocyclopropane-1-carboxylate + H2O = 2-oxobutanoate + NH4(+). In terms of biological role, catalyzes a cyclopropane ring-opening reaction, the irreversible conversion of 1-aminocyclopropane-1-carboxylate (ACC) to ammonia and alpha-ketobutyrate. Allows growth on ACC as a nitrogen source. This chain is 1-aminocyclopropane-1-carboxylate deaminase, found in Paraburkholderia xenovorans (strain LB400).